The primary structure comprises 1308 residues: Chromosome partition protein Smc (1308 aa).

Residue 34–41 coordinates ATP; sequence PNGCGKSN. Positions 115–181 are disordered; the sequence is AAREASMEEV…VAEGQPSDAQ (67 aa). The span at 137-169 shows a compositional bias: low complexity; that stretch reads TEAEATEQQAAPSEGAAPTTEATAPSTENEAAP. Residues 278 to 600 are a coiled coil; sequence ITKYKTKKRL…DTLRAEYATL (323 aa). An SMC hinge domain is found at 637–757; sequence AGVLADFLEV…VPDPAIGREL (121 aa). 2 coiled-coil regions span residues 791-1046 and 1110-1148; these read SLKR…ELHA and MALE…EIDQ.

This sequence belongs to the SMC family. In terms of assembly, homodimer.

Its subcellular location is the cytoplasm. Its function is as follows. Required for chromosome condensation and partitioning. The protein is Chromosome partition protein Smc of Koribacter versatilis (strain Ellin345).